Consider the following 325-residue polypeptide: MAAAMAEQEGSKGSARNRGGVQRVEGKLRASVEKGDYYEAHQMYRTLFFRYMSQSKHIEARELMYSGALLFFSHSQQNSAADLSMLVLESLEKHEVKVTEELLENLAKLFSLMDPNSPERVAFVSRALKWSSGGSGKFGHQKLHQFLAITLWKEQNYYESRYHFLHSSDGEGCANMLVEYSSTRGYRSEVDMFVAQAVLQFLCLKNKTSASVVFTTYTQKHPSIERGPPFVQPLLNFIWFLLLAVEGGKLTVFTVLCEQYQPSLKRDPMYNEYLDRIGQLFFGLPPKQSSSYGGLLGNLLNSLMGSGEDDDVEDGQEDSSPIELD.

2 disordered regions span residues 1–22 (MAAAMAEQEGSKGSARNRGGVQ) and 306–325 (SGEDDDVEDGQEDSSPIELD). Residues 307–317 (GEDDDVEDGQE) are compositionally biased toward acidic residues.

This sequence belongs to the GET4 family. In terms of assembly, component of the bag6/bat3 complex.

The protein resides in the cytoplasm. The protein localises to the cytosol. In terms of biological role, as part of a cytosolic protein quality control complex, the bag6/bat3 complex, maintains misfolded and hydrophobic patches-containing proteins in a soluble state and participates in their proper delivery to the endoplasmic reticulum or alternatively can promote their sorting to the proteasome where they undergo degradation. The bag6/bat3 complex is involved in the post-translational delivery of tail-anchored/type II transmembrane proteins to the endoplasmic reticulum membrane. Similarly, the bag6/bat3 complex also functions as a sorting platform for proteins of the secretory pathway that are mislocalized to the cytosol either delivering them to the proteasome for degradation or to the endoplasmic reticulum. The bag6/bat3 complex also plays a role in the endoplasmic reticulum-associated degradation (ERAD), a quality control mechanism that eliminates unwanted proteins of the endoplasmic reticulum through their retrotranslocation to the cytosol and their targeting to the proteasome. It maintains these retrotranslocated proteins in an unfolded yet soluble state condition in the cytosol to ensure their proper delivery to the proteasome. The sequence is that of Golgi to ER traffic protein 4 homolog A (get4-a) from Xenopus laevis (African clawed frog).